The chain runs to 359 residues: Histidinol-phosphate aminotransferase (359 aa).

N6-(pyridoxal phosphate)lysine is present on Lys217.

Belongs to the class-II pyridoxal-phosphate-dependent aminotransferase family. Histidinol-phosphate aminotransferase subfamily. In terms of assembly, homodimer. Pyridoxal 5'-phosphate serves as cofactor.

It carries out the reaction L-histidinol phosphate + 2-oxoglutarate = 3-(imidazol-4-yl)-2-oxopropyl phosphate + L-glutamate. It functions in the pathway amino-acid biosynthesis; L-histidine biosynthesis; L-histidine from 5-phospho-alpha-D-ribose 1-diphosphate: step 7/9. In Salmonella typhi, this protein is Histidinol-phosphate aminotransferase.